The following is a 430-amino-acid chain: Agropine synthesis reductase (430 aa).

Residue 203 to 227 participates in NAD(+) binding; the sequence is LISGPSRGIGKAIAENLIAHGYRMS. S333 contacts substrate. The active-site Proton acceptor is the Y346.

It belongs to the short-chain dehydrogenases/reductases (SDR) family.

Its pathway is opine metabolism; mannopine biosynthesis. In terms of biological role, reduces deoxy-fructosyl-glutamine to mannopine. The protein is Agropine synthesis reductase (mas1) of Rhizobium rhizogenes (Agrobacterium rhizogenes).